The primary structure comprises 427 residues: tRNA(Ile)-lysidine synthase (427 aa).

27-32 (SGGVDS) provides a ligand contact to ATP.

It belongs to the tRNA(Ile)-lysidine synthase family.

It localises to the cytoplasm. It catalyses the reaction cytidine(34) in tRNA(Ile2) + L-lysine + ATP = lysidine(34) in tRNA(Ile2) + AMP + diphosphate + H(+). Ligates lysine onto the cytidine present at position 34 of the AUA codon-specific tRNA(Ile) that contains the anticodon CAU, in an ATP-dependent manner. Cytidine is converted to lysidine, thus changing the amino acid specificity of the tRNA from methionine to isoleucine. This is tRNA(Ile)-lysidine synthase from Streptococcus equi subsp. equi (strain 4047).